Reading from the N-terminus, the 163-residue chain is Nucleotide-binding protein CKO_02735 (163 aa).

The protein belongs to the YajQ family.

Functionally, nucleotide-binding protein. This Citrobacter koseri (strain ATCC BAA-895 / CDC 4225-83 / SGSC4696) protein is Nucleotide-binding protein CKO_02735.